A 533-amino-acid chain; its full sequence is Glucosidase 2 subunit beta (533 aa).

Residues 1–13 (MLLLLLLLPMCWA) form the signal peptide. Ser-23 bears the Phosphoserine mark. LDL-receptor class A domains lie at 36–70 (FTCL…AACP) and 71–112 (NGSF…IVCE). Cystine bridges form between Cys-38–Cys-57 and Cys-55–Cys-69. Position 48 (Asp-48) interacts with substrate. Positions 49, 52, 54, 56, 62, and 63 each coordinate Ca(2+). Position 52 (Asp-52) interacts with substrate. The N-linked (GlcNAc...) asparagine glycan is linked to Asn-71. Intrachain disulfides connect Cys-76-Cys-98, Cys-96-Cys-111, and Cys-99-Cys-115. Position 88 is a phosphoserine; by PKC (Ser-88). Ca(2+) contacts are provided by Asp-93, Val-95, Asp-97, Asp-103, and Glu-104. Residue Lys-165 is modified to N6-succinyllysine. Residue Ser-167 is modified to Phosphoserine. EF-hand domains lie at 208–243 (RERE…DTDG) and 244–279 (DGAL…RDKY). Residues Asp-221, Asp-223, Asp-225, and Glu-232 each contribute to the Ca(2+) site. The segment at 284–363 (LPTEYPPSPP…SPTEEDRMPP (80 aa)) is disordered. Positions 312 to 336 (TEEEDEDEEDEETEEDEDEEDEDSQ) are enriched in acidic residues. Phosphoserine; by PKC occurs at positions 388 and 395. The 102-residue stretch at 418-519 (SQCYELTTNE…ELMTPAACPE (102 aa)) folds into the MRH domain. Cys-420 and Cys-433 are joined by a disulfide. Ser-439 is modified (phosphoserine; by PKC). Disulfide bonds link Cys-476/Cys-505 and Cys-490/Cys-517. Asn-481 carries N-linked (GlcNAc...) asparagine glycosylation. The Prevents secretion from ER signature appears at 530–533 (HDEL).

In terms of assembly, heterodimer of a catalytic alpha subunit (GANAB) and a beta subunit (PRKCSH). Binds glycosylated PTPRC. As to expression, ubiquitous. Highly expressed in liver, spleen, lung, duodenum, stomach, adrenal gland, pituitary, testis, corpus luteum, uterus and fetal ovary.

It is found in the endoplasmic reticulum. The protein operates within glycan metabolism; N-glycan metabolism. Its function is as follows. Regulatory subunit of glucosidase II that cleaves sequentially the 2 innermost alpha-1,3-linked glucose residues from the Glc(2)Man(9)GlcNAc(2) oligosaccharide precursor of immature glycoproteins. Required for efficient PKD1/Polycystin-1 biogenesis and trafficking to the plasma membrane of the primary cilia. This is Glucosidase 2 subunit beta (PRKCSH) from Bos taurus (Bovine).